The sequence spans 429 residues: Glutamate-1-semialdehyde 2,1-aminomutase (429 aa).

The residue at position 266 (Lys-266) is an N6-(pyridoxal phosphate)lysine.

It belongs to the class-III pyridoxal-phosphate-dependent aminotransferase family. HemL subfamily. Requires pyridoxal 5'-phosphate as cofactor.

Its subcellular location is the cytoplasm. It catalyses the reaction (S)-4-amino-5-oxopentanoate = 5-aminolevulinate. The protein operates within porphyrin-containing compound metabolism; protoporphyrin-IX biosynthesis; 5-aminolevulinate from L-glutamyl-tRNA(Glu): step 2/2. The polypeptide is Glutamate-1-semialdehyde 2,1-aminomutase (hemL) (Aeropyrum pernix (strain ATCC 700893 / DSM 11879 / JCM 9820 / NBRC 100138 / K1)).